The primary structure comprises 463 residues: Fumarate hydratase class II (463 aa).

Residues 95–97 (SGT), 126–129 (HPND), 136–138 (SSN), and Thr184 each bind substrate. His185 functions as the Proton donor/acceptor in the catalytic mechanism. Ser315 is a catalytic residue. Substrate-binding positions include Ser316 and 321–323 (KIN).

Belongs to the class-II fumarase/aspartase family. Fumarase subfamily. As to quaternary structure, homotetramer.

It localises to the cytoplasm. It carries out the reaction (S)-malate = fumarate + H2O. It functions in the pathway carbohydrate metabolism; tricarboxylic acid cycle; (S)-malate from fumarate: step 1/1. In terms of biological role, involved in the TCA cycle. Catalyzes the stereospecific interconversion of fumarate to L-malate. The polypeptide is Fumarate hydratase class II (Chlamydia trachomatis serovar D (strain ATCC VR-885 / DSM 19411 / UW-3/Cx)).